The primary structure comprises 318 residues: Serine protease 41 (318 aa).

A signal peptide spans 1-19 (MGARGALLLALLLARAGLG). Positions 20–54 (KPGELGALQAGPGAARRPGGGGREEACGHREIHAL) are excised as a propeptide. The Peptidase S1 domain maps to 55-297 (VAGGVESARG…YFHWIRRVMS (243 aa)). Cysteines 80 and 96 form a disulfide. Residues His-95 and Asp-147 each act as charge relay system in the active site. Disulfide bonds link Cys-181/Cys-255, Cys-215/Cys-234, and Cys-245/Cys-273. The N-linked (GlcNAc...) asparagine glycan is linked to Asn-211. Ser-249 acts as the Charge relay system in catalysis. N-linked (GlcNAc...) asparagine glycosylation occurs at Asn-284. Residue Ser-299 is the site of GPI-anchor amidated serine attachment. A propeptide spans 300–318 (TPRPNPSQLLLLLALLWAP) (removed in mature form).

This sequence belongs to the peptidase S1 family. Post-translationally, N-glycosylated.

It localises to the cell membrane. This chain is Serine protease 41, found in Homo sapiens (Human).